An 830-amino-acid chain; its full sequence is C-Jun-amino-terminal kinase-interacting protein 2 (830 aa).

Disordered regions lie at residues 1 to 26, 44 to 354, 367 to 438, 452 to 504, and 539 to 574; these read MADR…PPQD, CGLG…ADSP, EGSS…PGPC, LWAT…GSTA, and GNDS…PDSP. Over residues 77 to 105 the composition is skewed to acidic residues; that stretch reads DFQEFEMIDDNEEEDDEEEEEEEEEEEDG. A JNK-binding domain (JBD) region spans residues 111-278; sequence AGGGPGSQAL…RMISSISETE (168 aa). The segment covering 142–172 has biased composition (polar residues); that stretch reads LHLTTLGAQDSLNNNNGGFTSAPPSSWQETV. Composition is skewed to low complexity over residues 176-190 and 218-227; these read PAQE…PLLP and ASSGGASPSS. The span at 233–249 shows a compositional bias: basic and acidic residues; it reads ADLRSHSSGGHEGRRSS. A necessary for interaction with FGF13 region spans residues 242-504; the sequence is GHEGRRSSQE…PGSRTTGSTA (263 aa). Phosphoserine occurs at positions 257, 304, and 307. Low complexity predominate over residues 271–307; it reads ISSISETELELSSDGGSSSGRSSHLTNSIEEASSPAS. The segment covering 333 to 352 has biased composition (acidic residues); it reads TNSEYESGSESEPDLSEDAD. The segment covering 427-437 has biased composition (low complexity); it reads APRLGPAQPGP. Composition is skewed to acidic residues over residues 471-490 and 541-555; these read SEEE…DAED and DSEE…EEEA. An SH3 domain is found at 610-671; that stretch reads EREQTHRAVF…PAFYAHAVPG (62 aa). The region spanning 683 to 819 is the PID domain; the sequence is PCWVDRFDVQ…FLEYYQEHLA (137 aa).

Belongs to the JIP scaffold family. As to quaternary structure, forms homo- or heterooligomeric complexes. Binds specific components of the JNK signaling pathway namely JNK1, JNK2, JNK3, MAP2K7, MAP3K10, MAP3K11, MAP3K12 and MAPK13. Also binds the proline-rich domain-containing splice variant of apolipoprotein E receptor 2 (ApoER2). Binds the TPR motif-containing C-terminal of kinesin light chain. Binds the cytoplasmic tails of LRP1 and LRP2 (Megalin). Interacts with DCLK2. Interacts with FGF13; enables the interaction with MAPK13 and may regulate the MAPK8IP2 scaffolding activity. Interacts with TIAM1 and TIAM2. Interacts with SH3RF2. In terms of tissue distribution, highly expressed in brain. Expressed in all neurons. Also expressed in testis, primarily in the epididymal epidermis.

The protein resides in the cytoplasm. Functionally, the JNK-interacting protein (JIP) group of scaffold proteins selectively mediates JNK signaling by aggregating specific components of the MAPK cascade to form a functional JNK signaling module. JIP2 inhibits IL1 beta-induced apoptosis in insulin-secreting cells. The polypeptide is C-Jun-amino-terminal kinase-interacting protein 2 (Mapk8ip2) (Mus musculus (Mouse)).